Here is a 947-residue protein sequence, read N- to C-terminus: Cell adhesion molecule CEACAM5 (947 aa).

Residues 1–34 form the signal peptide; that stretch reads MEASSVLPCKWCTHLQGLLLTASFLTCCHLPTTA. Ig-like V-type domains follow at residues 35–132, 166–259, 270–378, 392–498, 509–615, 642–733, and 746–851; these read QITI…EIVS, SEGG…VQLY, PLQV…LHVN, RLSI…LQLD, QVKI…LHVN, GESV…VQLQ, and DQLI…VQVH. N57, N103, N110, N207, N224, N341, N461, N472, N578, N698, N709, N816, and N823 each carry an N-linked (GlcNAc...) asparagine glycan. The Ig-like C2-type 1 domain maps to 859–943; that stretch reads PFVRVTDTTV…SKSSLPVRLA (85 aa). The cysteines at positions 878 and 926 are disulfide-linked.

It belongs to the immunoglobulin superfamily. CEA family. In terms of assembly, homodimer.

Its subcellular location is the cell membrane. The protein localises to the apical cell membrane. It is found in the cell surface. Functionally, cell surface glycoprotein that plays a role in cell adhesion, intracellular signaling and tumor progression. Mediates homophilic and heterophilic cell adhesion with other carcinoembryonic antigen-related cell adhesion molecules, such as CEACAM6. Plays a role as an oncogene by promoting tumor progression; induces resistance to anoikis of colorectal carcinoma cells. The sequence is that of Cell adhesion molecule CEACAM5 from Mus musculus (Mouse).